A 480-amino-acid polypeptide reads, in one-letter code: Salicylate hydroxylase asL1 (480 aa).

A helical membrane pass occupies residues 17–37 (PMEIAIVGGGIVGVILAIGLT). Residues glutamate 47 and alanine 60 each coordinate FAD. Asparagine 87 carries N-linked (GlcNAc...) asparagine glycosylation. FAD is bound at residue arginine 131. Asparagine 168 carries an N-linked (GlcNAc...) asparagine glycan. Catalysis depends on residues arginine 213 and tyrosine 246. A glycan (N-linked (GlcNAc...) asparagine) is linked at asparagine 250. The FAD site is built by aspartate 329 and alanine 342. N-linked (GlcNAc...) asparagine glycans are attached at residues asparagine 400 and asparagine 464.

The protein belongs to the paxM FAD-dependent monooxygenase family. It depends on FAD as a cofactor.

It is found in the membrane. The protein operates within secondary metabolite biosynthesis; terpenoid biosynthesis. In terms of biological role, salicylate hydroxylase; part of the gene cluster that mediates the biosynthesis of xenovulene A, an unusual meroterpenoid that has potent inhibitory effects on the human gamma-aminobutyrate A (GABAA) benzodiazepine receptor. The first step of xenovulene A biosynthesis is the biosynthesis of 3-methylorcinaldehyde performed by the non-reducing polyketide synthase aspks1. The salicylate hydroxylase asL1 then catalyzes the oxidative dearomatization of 3-methylorcinaldehyde to yield a dearomatized hydroxycyclohexadione. The 2-oxoglutarate-dependent dioxygenase asL3 further catalyzes the oxidative ring expansion to provide the first tropolone metabolite. The cytochrome P450 monooxygenase asR2 allows the synthesis of tropolone hemiacetal. In parallel, a previously unrecognised class of terpene cyclase, asR6, produces alpha-humulene from farnesylpyrophosphate (FPP). The putative Diels-Alderase asR5 probably catalyzes the formation of the tropolone-humulene skeleton by linking humulene and the polyketide moiety. Oxidative-ring contractions catalyzed by asL4 and asL6 then processively remove carbon atoms from the polyketide to yield xenovulene A. The protein is Salicylate hydroxylase asL1 of Sarocladium schorii (Acremonium strictum (strain IMI 501407)).